The sequence spans 314 residues: DNA-directed RNA polymerase subunit alpha (314 aa).

The segment at 1 to 227 is alpha N-terminal domain (alpha-NTD); that stretch reads MLEIEKPKIE…DYLKLFVALT (227 aa). Residues 244–314 are alpha C-terminal domain (alpha-CTD); sequence QDKILEMTIE…LGLSLRKSED (71 aa).

It belongs to the RNA polymerase alpha chain family. As to quaternary structure, homodimer. The RNAP catalytic core consists of 2 alpha, 1 beta, 1 beta' and 1 omega subunit. When a sigma factor is associated with the core the holoenzyme is formed, which can initiate transcription.

The catalysed reaction is RNA(n) + a ribonucleoside 5'-triphosphate = RNA(n+1) + diphosphate. Functionally, DNA-dependent RNA polymerase catalyzes the transcription of DNA into RNA using the four ribonucleoside triphosphates as substrates. In Heliobacterium modesticaldum (strain ATCC 51547 / Ice1), this protein is DNA-directed RNA polymerase subunit alpha.